A 300-amino-acid polypeptide reads, in one-letter code: Cation-efflux pump FieF (300 aa).

Transmembrane regions (helical) follow at residues 12-32 (AALS…FAWW), 40-60 (LAAL…LFVV), 82-102 (AALA…LTGF), and 114-134 (PSIG…LVTF). The Zn(2+) site is built by D45 and D49. The Zn(2+) site is built by H153 and D157. Transmembrane regions (helical) follow at residues 155–175 (QSDV…WYGF) and 178–198 (ADAL…LRMG).

Belongs to the cation diffusion facilitator (CDF) transporter (TC 2.A.4) family. FieF subfamily. As to quaternary structure, homodimer.

It localises to the cell inner membrane. It catalyses the reaction Zn(2+)(in) + H(+)(out) = Zn(2+)(out) + H(+)(in). The enzyme catalyses Cd(2+)(in) + H(+)(out) = Cd(2+)(out) + H(+)(in). The catalysed reaction is Fe(2+)(in) + H(+)(out) = Fe(2+)(out) + H(+)(in). Functionally, divalent metal cation transporter which exports Zn(2+), Cd(2+) and possibly Fe(2+). May be involved in zinc and iron detoxification by efflux. This chain is Cation-efflux pump FieF, found in Yersinia pestis bv. Antiqua (strain Antiqua).